Here is a 256-residue protein sequence, read N- to C-terminus: Pyridoxine 5'-phosphate synthase (256 aa).

3-amino-2-oxopropyl phosphate is bound by residues N8 and R19. H44 serves as the catalytic Proton acceptor. R46 and H51 together coordinate 1-deoxy-D-xylulose 5-phosphate. Catalysis depends on E74, which acts as the Proton acceptor. T111 is a binding site for 1-deoxy-D-xylulose 5-phosphate. H202 functions as the Proton donor in the catalytic mechanism. 3-amino-2-oxopropyl phosphate is bound by residues D203 and 225-226 (GH).

It belongs to the PNP synthase family. Homooctamer; tetramer of dimers.

Its subcellular location is the cytoplasm. It catalyses the reaction 3-amino-2-oxopropyl phosphate + 1-deoxy-D-xylulose 5-phosphate = pyridoxine 5'-phosphate + phosphate + 2 H2O + H(+). It participates in cofactor biosynthesis; pyridoxine 5'-phosphate biosynthesis; pyridoxine 5'-phosphate from D-erythrose 4-phosphate: step 5/5. Its function is as follows. Catalyzes the complicated ring closure reaction between the two acyclic compounds 1-deoxy-D-xylulose-5-phosphate (DXP) and 3-amino-2-oxopropyl phosphate (1-amino-acetone-3-phosphate or AAP) to form pyridoxine 5'-phosphate (PNP) and inorganic phosphate. This Xanthomonas campestris pv. campestris (strain 8004) protein is Pyridoxine 5'-phosphate synthase.